A 1241-amino-acid chain; its full sequence is Intraflagellar transport protein 122 homolog (1241 aa).

4 WD repeats span residues lysine 10 to lysine 50, glycine 51 to threonine 91, asparagine 93 to histidine 129, and serine 131 to isoleucine 169. Positions valine 222–asparagine 246 are disordered. Over residues glutamate 229–proline 242 the composition is skewed to acidic residues. 3 WD repeats span residues alanine 278–valine 317, glutamate 319–tyrosine 359, and lysine 512–glutamine 551.

In terms of assembly, component of the IFT complex A (IFT-A) complex. IFT-A complex is divided into a core subcomplex composed of IFT122:IFT140:WDR19 which is associated with TULP3 and a peripheral subcomplex composed of IFT43:WDR35:TTC21B. Interacts with IFT43:WDR35; the interaction connects the 2 IFT-A subcomplexes. Interacts with IFTAP; the interaction associates IFTAP with IFT-A complex. Expressed in many tissues. Predominant expression in testis and pituitary.

The protein localises to the cell projection. It is found in the cilium. It localises to the cytoplasm. The protein resides in the cytoskeleton. Its subcellular location is the cilium basal body. In terms of biological role, as a component of the IFT complex A (IFT-A), a complex required for retrograde ciliary transport and entry into cilia of G protein-coupled receptors (GPCRs), it is required in ciliogenesis and ciliary protein trafficking. Involved in cilia formation during neuronal patterning. Acts as a negative regulator of Shh signaling. Required to recruit TULP3 to primary cilia. The sequence is that of Intraflagellar transport protein 122 homolog from Homo sapiens (Human).